A 1457-amino-acid polypeptide reads, in one-letter code: Ras guanine nucleotide exchange factor C (1457 aa).

Residues 1–55 form an RCC1 1 repeat; that stretch reads MSVFTFGHGSNGALGLGKITDDTCPTPQKVNYFTEIDKRVKKVACGSYHTVFVTD. Disordered regions lie at residues 75 to 196, 209 to 264, 282 to 313, and 376 to 404; these read FYTS…PLLN, HYES…RINK, EQQQ…DEDP, and QQQL…SLQT. Composition is skewed to low complexity over residues 83 to 121 and 134 to 158; these read TTTT…KIVN and SNTT…LPPT. 2 stretches are compositionally biased toward basic and acidic residues: residues 171-188 and 209-224; these read IKLD…ELIQ and HYES…KDNE. The segment covering 225–237 has biased composition (acidic residues); it reads NENEEDEDDDDDD. A compositionally biased stretch (basic and acidic residues) spans 238-249; sequence STIRQNEDKESS. 2 stretches are compositionally biased toward low complexity: residues 283–292 and 376–403; these read QQQQPQQPQQ and QQQL…SSLQ. 4 RCC1 repeats span residues 351–401, 432–483, 485–549, and 590–647; these read GGNV…SSSS, WGEL…CYTE, GKMY…VLTQ, and SGEV…ALVE. One can recognise a DH domain in the interval 650-971; that stretch reads PKTKLALQLV…QVLLERMNQN (322 aa). A compositionally biased stretch (low complexity) spans 703 to 715; sequence LPPSLKGLSGGLP. The tract at residues 703 to 762 is disordered; the sequence is LPPSLKGLSGGLPDNANNTIKNGKDKDNHHNGDSNGHHSNGHYHGNGNNGNNSITTSNSI. The segment covering 724–738 has biased composition (basic and acidic residues); the sequence is NGKDKDNHHNGDSNG. A compositionally biased stretch (low complexity) spans 739–762; sequence HHSNGHYHGNGNNGNNSITTSNSI. In terms of domain architecture, N-terminal Ras-GEF spans 989 to 1109; that stretch reads GNPQIMGGSL…SVSQIKLQYF (121 aa). A disordered region spans residues 1127–1210; the sequence is LTQNEITTPP…NNNNNNNNLT (84 aa). The stretch at 1138–1211 forms a coiled coil; it reads LQIQNNNQNN…NNNNNNNLTN (74 aa). Positions 1142-1210 are enriched in low complexity; it reads NNNQNNNLEN…NNNNNNNNLT (69 aa). The Ras-GEF domain occupies 1232-1454; it reads QPIEVAQTLT…DDKQAQKISS (223 aa).

Promotes the exchange of Ras-bound GDP by GTP. This Dictyostelium discoideum (Social amoeba) protein is Ras guanine nucleotide exchange factor C (gefC).